A 456-amino-acid polypeptide reads, in one-letter code: DEAD-box ATP-dependent RNA helicase 10 (456 aa).

Residues 9–37 (KTFAELGVREELVKACERLGWKNPSKIQA) carry the Q motif motif. In terms of domain architecture, Helicase ATP-binding spans 40 to 223 (LPFALEGKDV…RACLRNPVKI (184 aa)). ATP is bound at residue 53-60 (AQTGSGKT). The DEAD box motif lies at 171–174 (DEAD). One can recognise a Helicase C-terminal domain in the interval 250–394 (YLVYILSEMP…EYPAEEDEVL (145 aa)). The tract at residues 407-456 (SAMNMKESGGRKRRGEDDEESERFLGGNKDRGNKERGGNKDKKSSKKFKR) is disordered. Residues 434-448 (NKDRGNKERGGNKDK) show a composition bias toward basic and acidic residues.

It belongs to the DEAD box helicase family. DDX47/RRP3 subfamily. Expressed in all tissues and organs examined including root, cotyledon, first and second leaves, third and fourth leaves, fifth and sixth leaves, shoot apex, flower, flower bud, cauline leaf and rosette leaves.

The protein resides in the nucleus. It is found in the nucleolus. The enzyme catalyses ATP + H2O = ADP + phosphate + H(+). Involved in leaf polarity establishment by functioning cooperatively with AS2 to repress abaxial genes ARF3, ARF4, KAN1, KAN2, YAB1 and YAB5, and the knox homeobox genes KNAT1, KNAT2, KNAT6, and STM to promote adaxial development in leaf primordia at shoot apical meristems at high temperatures. Involved in the processing of pre-rRNA intermediates at high temperatures. This is DEAD-box ATP-dependent RNA helicase 10 (RH10) from Arabidopsis thaliana (Mouse-ear cress).